A 235-amino-acid chain; its full sequence is Probable deoxycytidine kinase FPV151 (235 aa).

30 to 38 is a binding site for ATP; that stretch reads GNISAGKST. Residues Glu53, Tyr68, and Gln79 each contribute to the substrate site. The Proton acceptor role is filled by Glu104. Substrate is bound by residues Arg105, Asp110, and Glu172.

This sequence belongs to the DCK/DGK family.

It carries out the reaction 2'-deoxycytidine + a ribonucleoside 5'-triphosphate = dCMP + a ribonucleoside 5'-diphosphate + H(+). The polypeptide is Probable deoxycytidine kinase FPV151 (Vertebrata (FPV)).